The chain runs to 257 residues: Global transcriptional regulator CodY (257 aa).

The segment at 1 to 155 is GAF domain; sequence MSLLSKTREL…AATVLGMEIL (155 aa). A DNA-binding region (H-T-H motif) is located at residues 203 to 222; the sequence is ASKVADRVGITRSVIVNALR.

It belongs to the CodY family.

It localises to the cytoplasm. Functionally, DNA-binding global transcriptional regulator which is involved in the adaptive response to starvation and acts by directly or indirectly controlling the expression of numerous genes in response to nutrient availability. During rapid exponential growth, CodY is highly active and represses genes whose products allow adaptation to nutrient depletion. The polypeptide is Global transcriptional regulator CodY (Staphylococcus carnosus (strain TM300)).